A 127-amino-acid chain; its full sequence is Adult-specific rigid cuticular protein 12.6 (127 aa).

One can recognise a Chitin-binding type R&amp;R domain in the interval 9–87 (GPAYNFGYNT…ALAALAPKAP (79 aa)).

In terms of biological role, component of the rigid cuticle of the spider. This chain is Adult-specific rigid cuticular protein 12.6, found in Araneus diadematus (European garden spider).